A 299-amino-acid polypeptide reads, in one-letter code: Oxygen-dependent coproporphyrinogen-III oxidase (299 aa).

Ser-92 is a substrate binding site. The a divalent metal cation site is built by His-96 and His-106. His-106 acts as the Proton donor in catalysis. 108 to 110 (NVR) provides a ligand contact to substrate. A divalent metal cation-binding residues include His-145 and His-175. Residues 240-275 (YVEFNLVWDRGTLFGLQTGGRTESILMSMPPLVRWE) are important for dimerization. A substrate-binding site is contributed by 258 to 260 (GGR).

Belongs to the aerobic coproporphyrinogen-III oxidase family. As to quaternary structure, homodimer. Requires a divalent metal cation as cofactor.

The protein resides in the cytoplasm. The enzyme catalyses coproporphyrinogen III + O2 + 2 H(+) = protoporphyrinogen IX + 2 CO2 + 2 H2O. It participates in porphyrin-containing compound metabolism; protoporphyrin-IX biosynthesis; protoporphyrinogen-IX from coproporphyrinogen-III (O2 route): step 1/1. In terms of biological role, involved in the heme biosynthesis. Catalyzes the aerobic oxidative decarboxylation of propionate groups of rings A and B of coproporphyrinogen-III to yield the vinyl groups in protoporphyrinogen-IX. The sequence is that of Oxygen-dependent coproporphyrinogen-III oxidase from Salmonella heidelberg (strain SL476).